A 78-amino-acid chain; its full sequence is Acyl carrier protein (78 aa).

Positions 2-77 (STIEERVKKI…AAIDFIQANQ (76 aa)) constitute a Carrier domain. Position 37 is an O-(pantetheine 4'-phosphoryl)serine (Ser37).

The protein belongs to the acyl carrier protein (ACP) family. Post-translationally, 4'-phosphopantetheine is transferred from CoA to a specific serine of apo-ACP by AcpS. This modification is essential for activity because fatty acids are bound in thioester linkage to the sulfhydryl of the prosthetic group.

It localises to the cytoplasm. The protein operates within lipid metabolism; fatty acid biosynthesis. In terms of biological role, carrier of the growing fatty acid chain in fatty acid biosynthesis. This chain is Acyl carrier protein, found in Pectobacterium atrosepticum (strain SCRI 1043 / ATCC BAA-672) (Erwinia carotovora subsp. atroseptica).